The sequence spans 360 residues: MKALILVGGYGTRLRPLTLSVPKPLVDFCNKPILLHQVEALVKAGVTHVILAVSYMSDMLEKEMKEQEKRLGIRISMSHEKEPLGTAGPLALARELLTENSEPFFVLNSDVICDFPFEDMVRFHKHHGKEGTIVVTKVEEPSKYGVVVYETESGQIQRFVEKPQVFVSNKINSGLYIFSPAVLDRIQLRPTSIEKEIFPAMAQEGQLYAMELQGFWMDIGQPKDFLTGMCMYLQSVRQKHPEWLHAGPGFIGNVLVDPTAKIGQNCSIGPNVTIGPGVTVEDGVRIKRCTVMKGSRLHSHSWLESSIVGWSSSVGQWVRMENVTVLGEDVIVNDELYLNGANVLPHKCISESVPEPRIIM.

Belongs to the transferase hexapeptide repeat family.

The enzyme catalyses alpha-D-mannose 1-phosphate + GTP + H(+) = GDP-alpha-D-mannose + diphosphate. Its pathway is nucleotide-sugar biosynthesis; GDP-alpha-D-mannose biosynthesis; GDP-alpha-D-mannose from alpha-D-mannose 1-phosphate (GTP route): step 1/1. The protein is Mannose-1-phosphate guanyltransferase beta-A (gmppb-a) of Xenopus laevis (African clawed frog).